The primary structure comprises 670 residues: Sodium, potassium, lithium and rubidium/H(+) antiporter (670 aa).

A run of 11 helical transmembrane segments spans residues 5 to 27, 46 to 66, 83 to 103, 105 to 125, 156 to 176, 182 to 202, 228 to 248, 276 to 296, 314 to 334, 355 to 375, and 389 to 409; these read LVVL…IPFI, GLHF…PLLF, PILL…GYTI, WMIP…LSPT, ASGL…AFSL, SFVF…FLII, FVIY…VVAG, IILF…IPDV, YILV…LFFW, LLIS…FSIP, and LILF…TVVL.

Belongs to the monovalent cation:proton antiporter 1 (CPA1) transporter (TC 2.A.36) family. Nhak (TC 2.A.36.3.2) subfamily.

It localises to the cell membrane. Functionally, transporter involved in the efflux of sodium, potassium, lithium and rubidium. This Bacillus subtilis (strain 168) protein is Sodium, potassium, lithium and rubidium/H(+) antiporter (nhaK).